The chain runs to 257 residues: Probable oxidoreductase yanE (257 aa).

This sequence belongs to the oxidoreductase OpS7 family.

It functions in the pathway secondary metabolite biosynthesis; terpenoid biosynthesis. Its function is as follows. Part of the gene cluster that mediates the biosynthesis of yanuthone D, a fungal isoprenoid epoxycyclohexenone that acts as an antibiotic against fungi and bacteria. The first step of the pathway is the synthesis of 6-methylsalicylic acid (6-MSA) by the polyketide synthase yanA. 6-MSA is then converted to m-cresol by the decarboxylase yanB. The cytochrome P450 monooxygenase yanC then catalyzes the oxidation of m-cresol to toluquinol. Epoxidation of toluquinol is then performed by the short chain dehydrogenase yanD, with the help of yanE, and a further prenylation by yanG leads to 7-deacetoxyyanuthone A. The next step is the hydroxylation of C-22 of 7-deacetoxyyanuthone A by the cytochrome P450 monooxygenase yanH to yield 22-deacetylyanuthone A. O-Mevalon transferase yanI then attaches mevalon to the hydroxyl group of 22-deacetylyanuthone A to produce yanuthone E. Finally, the FAD-dependent monooxygenase yanF oxidizes the hydroxyl group at C15 of yanuthone E to form yanuthone D. Furthermore, several branching points in the pathway lead to the production of yanuthones F and G from 7-deacetoxyyanuthone A; yanuthones H and I from 22-deacetylyanuthone A; and yanuthone J from yanuthone E. YanE is also involved in the synthesis of yanuthone X1 which does not have 6-methylsalicylic acid (6-MSA) as precursor. In Aspergillus niger (strain ATCC 1015 / CBS 113.46 / FGSC A1144 / LSHB Ac4 / NCTC 3858a / NRRL 328 / USDA 3528.7), this protein is Probable oxidoreductase yanE.